The following is a 126-amino-acid chain: Protein K7 (126 aa).

The chain crosses the membrane as a helical span at residues 24 to 44 (LPLHLWILCSLLAFLPLLVFI).

As to quaternary structure, interacts with host CAMLG; this interaction allows efficient apoptosis inhibition. Additionally, interacts with vGPCR/ORF74 and induces its proteasomeal degradation.

It localises to the host membrane. It is found in the host mitochondrion. In terms of biological role, plays a role in the inhibition of host apoptosis to allow completion of the viral lytic replication and may thus favor the maintenance of persistent infection in infected host. This is Protein K7 (K7) from Homo sapiens (Human).